A 160-amino-acid chain; its full sequence is E3 ubiquitin ligase complex SCF subunit sconC (160 aa).

The interval 101–160 (ILAANYLDIKALLDVGCKTVANMIKGKSPEEIRKTFNIQNDFTPEEEDQIRRENEWAEDR) is interaction with the F-box domain of F-box proteins.

The protein belongs to the SKP1 family. Component of the SCF (SKP1-CUL1-F-box protein) E3 ubiquitin ligase complexes.

It participates in protein modification; protein ubiquitination. Functionally, essential component of the SCF (SKP1-CUL1-F-box protein) E3 ubiquitin ligase complexes, which mediate the ubiquitination and subsequent proteasomal degradation of target proteins. Controls sulfur metabolite repression, probably by mediating the inactivation or degradation of the metR transcription factor. The sequence is that of E3 ubiquitin ligase complex SCF subunit sconC (sconC) from Talaromyces marneffei (strain ATCC 18224 / CBS 334.59 / QM 7333) (Penicillium marneffei).